A 67-amino-acid polypeptide reads, in one-letter code: Conotoxin Cal12.1p2 (67 aa).

Positions 1–21 are excised as a propeptide; sequence DLITNSYTRGKPRHVTSWRNL.

In terms of processing, contains 4 disulfide bonds. Expressed by the venom duct.

The protein resides in the secreted. The protein is Conotoxin Cal12.1p2 of Californiconus californicus (California cone).